The chain runs to 201 residues: LexA repressor 1 (201 aa).

The H-T-H motif DNA-binding region spans 27–47 (LAEIAQAFGFASRNAAQKHVQ). Residues Ser122 and Lys159 each act as for autocatalytic cleavage activity in the active site.

It belongs to the peptidase S24 family. In terms of assembly, homodimer.

It carries out the reaction Hydrolysis of Ala-|-Gly bond in repressor LexA.. In terms of biological role, represses a number of genes involved in the response to DNA damage (SOS response), including recA and lexA. In the presence of single-stranded DNA, RecA interacts with LexA causing an autocatalytic cleavage which disrupts the DNA-binding part of LexA, leading to derepression of the SOS regulon and eventually DNA repair. The sequence is that of LexA repressor 1 from Xanthomonas oryzae pv. oryzae (strain KACC10331 / KXO85).